A 144-amino-acid chain; its full sequence is Deoxyuridine 5'-triphosphate nucleotidohydrolase (144 aa).

Substrate contacts are provided by residues 63 to 65 (RSG), Asn-76, and 80 to 82 (TID).

It belongs to the dUTPase family. Mg(2+) is required as a cofactor.

The enzyme catalyses dUTP + H2O = dUMP + diphosphate + H(+). Its pathway is pyrimidine metabolism; dUMP biosynthesis; dUMP from dCTP (dUTP route): step 2/2. Its function is as follows. This enzyme is involved in nucleotide metabolism: it produces dUMP, the immediate precursor of thymidine nucleotides and it decreases the intracellular concentration of dUTP so that uracil cannot be incorporated into DNA. This chain is Deoxyuridine 5'-triphosphate nucleotidohydrolase, found in Phocaeicola vulgatus (strain ATCC 8482 / DSM 1447 / JCM 5826 / CCUG 4940 / NBRC 14291 / NCTC 11154) (Bacteroides vulgatus).